We begin with the raw amino-acid sequence, 440 residues long: Glycerate 2-kinase (440 aa).

Residue K58 coordinates substrate.

It belongs to the glycerate kinase type-1 family. In terms of assembly, homodimer. Mg(2+) serves as cofactor. Ni(2+) is required as a cofactor. The cofactor is Mn(2+). It depends on Co(2+) as a cofactor.

The catalysed reaction is (R)-glycerate + ATP = (2R)-2-phosphoglycerate + ADP + H(+). Functionally, catalyzes the ATP-dependent phosphorylation of D-glycerate to 2-phosphoglycerate. It can also utilize GTP, CTP, UTP, ADP or pyrophosphate as phosphate donor. In Pyrococcus horikoshii (strain ATCC 700860 / DSM 12428 / JCM 9974 / NBRC 100139 / OT-3), this protein is Glycerate 2-kinase (gck).